Consider the following 308-residue polypeptide: Small ribosomal subunit protein uS2 (308 aa).

Ser-2 is modified (N-acetylserine). Laminin-binding stretches follow at residues 161 to 180 and 205 to 229; these read IPCN…MLAR and RDPE…EFQG. [DE]-W-[ST] repeat units follow at residues 230–232, 245–247, 279–281, 288–290, and 306–308; these read EWT and DWS. The tract at residues 242–308 is laminin-binding; it reads EVADWSEGVQ…DWGGATADWS (67 aa). Positions 262–308 are disordered; that stretch reads AGIEAPGKPAPAEVYAEDWSAQPATEDWSAAPTAQAGDWGGATADWS.

The protein belongs to the universal ribosomal protein uS2 family. Monomer (37LRP) and homodimer (67LR). Component of the small ribosomal subunit. Mature ribosomes consist of a small (40S) and a large (60S) subunit. The 40S subunit contains about 33 different proteins and 1 molecule of RNA (18S). The 60S subunit contains about 49 different proteins and 3 molecules of RNA (28S, 5.8S and 5S). Interacts with rps21. Interacts with several laminins including at least lamb1. Interacts with mdk. Post-translationally, acylated. Acylation may be a prerequisite for conversion of the monomeric 37 kDa laminin receptor precursor (37LRP) to the mature dimeric 67 kDa laminin receptor (67LR), and may provide a mechanism for membrane association. Cleaved by stromelysin-3 (ST3) at the cell surface. Cleavage by stromelysin-3 may be a mechanism to alter cell-extracellular matrix interactions.

It is found in the cell membrane. It localises to the cytoplasm. The protein resides in the nucleus. Functionally, required for the assembly and/or stability of the 40S ribosomal subunit. Required for the processing of the 20S rRNA-precursor to mature 18S rRNA in a late step of the maturation of 40S ribosomal subunits. Also functions as a cell surface receptor for laminin. Plays a role in cell adhesion to the basement membrane and in the consequent activation of signaling transduction pathways. May play a role in cell fate determination and tissue morphogenesis. The sequence is that of Small ribosomal subunit protein uS2 (rpsa) from Danio rerio (Zebrafish).